Consider the following 608-residue polypeptide: Glutamine--fructose-6-phosphate aminotransferase [isomerizing] (608 aa).

Cysteine 2 acts as the Nucleophile; for GATase activity in catalysis. The 216-residue stretch at 2-217 folds into the Glutamine amidotransferase type-2 domain; the sequence is CGIVGIVGTQ…DGDCAIVTRD (216 aa). SIS domains lie at 281–422 and 456–598; these read ADKA…ARGT and LSRD…VDQP. Residue lysine 603 is the For Fru-6P isomerization activity of the active site.

As to quaternary structure, homodimer.

The protein resides in the cytoplasm. It catalyses the reaction D-fructose 6-phosphate + L-glutamine = D-glucosamine 6-phosphate + L-glutamate. Its function is as follows. Catalyzes the first step in hexosamine metabolism, converting fructose-6P into glucosamine-6P using glutamine as a nitrogen source. This chain is Glutamine--fructose-6-phosphate aminotransferase [isomerizing], found in Agrobacterium fabrum (strain C58 / ATCC 33970) (Agrobacterium tumefaciens (strain C58)).